A 154-amino-acid chain; its full sequence is Myoglobin (154 aa).

Positions 2 to 148 (GLSDAEWQLV…FRNDIAAKYK (147 aa)) constitute a Globin domain. Residue S4 is modified to Phosphoserine. H65 lines the nitrite pocket. Residue H65 participates in O2 binding. T68 bears the Phosphothreonine mark. Heme b is bound at residue H94.

This sequence belongs to the globin family. Monomeric.

The protein resides in the cytoplasm. It is found in the sarcoplasm. It catalyses the reaction Fe(III)-heme b-[protein] + nitric oxide + H2O = Fe(II)-heme b-[protein] + nitrite + 2 H(+). The catalysed reaction is H2O2 + AH2 = A + 2 H2O. Functionally, monomeric heme protein which primary function is to store oxygen and facilitate its diffusion within muscle tissues. Reversibly binds oxygen through a pentacoordinated heme iron and enables its timely and efficient release as needed during periods of heightened demand. Depending on the oxidative conditions of tissues and cells, and in addition to its ability to bind oxygen, it also has a nitrite reductase activity whereby it regulates the production of bioactive nitric oxide. Under stress conditions, like hypoxia and anoxia, it also protects cells against reactive oxygen species thanks to its pseudoperoxidase activity. In Orycteropus afer (Aardvark), this protein is Myoglobin (MB).